We begin with the raw amino-acid sequence, 455 residues long: Retinoic acid receptor beta (455 aa).

Residues 1 to 87 are modulating; sequence MTTSSRTCPV…PLPPPRVYKP (87 aa). Residues 45–78 form a disordered region; it reads QSHPPTSGCSTPSPASVETQSTSSEELVPSPPSP. A compositionally biased stretch (polar residues) spans 47–66; sequence HPPTSGCSTPSPASVETQST. 2 consecutive NR C4-type zinc fingers follow at residues 88–108 and 124–148; these read CFVC…CEGC and CHRD…LQKC. Residues 88–153 constitute a DNA-binding region (nuclear receptor); sequence CFVCQDKSSG…RLQKCFEVGM (66 aa). The segment at 154 to 182 is hinge; sequence SKESVRNDRNKKKKEPTKQESTENYEMTA. Positions 183–417 constitute an NR LBD domain; the sequence is ELDDLTEKIR…PLIQEMLENS (235 aa). A disordered region spans residues 416–455; it reads NSEGHEPLTPTSNGNTAEHSPSISPSSVDNSSVSQSPMVQ. Positions 424-434 are enriched in polar residues; the sequence is TPTSNGNTAEH. A compositionally biased stretch (low complexity) spans 435–455; it reads SPSISPSSVDNSSVSQSPMVQ.

Belongs to the nuclear hormone receptor family. NR1 subfamily. In terms of assembly, heterodimer; with a RXR molecule. Binds DNA preferentially as a RAR/RXR heterodimer. As to expression, both isoforms expressed in heart, lung, kidney, liver, brain, lung and testis. Isoform Beta-1 is highly expressed in testes and brain. Levels increase during testes maturation. Isoform beta-2 is predominant in heart, kidney and lung.

The protein resides in the nucleus. In terms of biological role, receptor for retinoic acid. Retinoic acid receptors bind as heterodimers to their target response elements in response to their ligands, all-trans or 9-cis retinoic acid, and regulate gene expression in various biological processes. The RAR/RXR heterodimers bind to the retinoic acid response elements (RARE) composed of tandem 5'-AGGTCA-3' sites known as DR1-DR5. May be required for Sertoli cell differentiation and spermatogenesis. This chain is Retinoic acid receptor beta (RARB), found in Coturnix japonica (Japanese quail).